Reading from the N-terminus, the 220-residue chain is Chaperone protein TorD (220 aa).

Belongs to the TorD/DmsD family. TorD subfamily.

The protein localises to the cytoplasm. Involved in the biogenesis of TorA. Acts on TorA before the insertion of the molybdenum cofactor and, as a result, probably favors a conformation of the apoenzyme that is competent for acquiring the cofactor. The chain is Chaperone protein TorD from Vibrio cholerae serotype O1 (strain M66-2).